The sequence spans 327 residues: Ribose-phosphate pyrophosphokinase (327 aa).

Residues 40 to 42 (DGE) and 99 to 100 (RQ) each bind ATP. Mg(2+)-binding residues include H134 and D173. K196 is an active-site residue. D-ribose 5-phosphate contacts are provided by residues R198, D222, and 226 to 230 (DTANT).

The protein belongs to the ribose-phosphate pyrophosphokinase family. Class I subfamily. In terms of assembly, homohexamer. Requires Mg(2+) as cofactor.

The protein localises to the cytoplasm. It catalyses the reaction D-ribose 5-phosphate + ATP = 5-phospho-alpha-D-ribose 1-diphosphate + AMP + H(+). The protein operates within metabolic intermediate biosynthesis; 5-phospho-alpha-D-ribose 1-diphosphate biosynthesis; 5-phospho-alpha-D-ribose 1-diphosphate from D-ribose 5-phosphate (route I): step 1/1. In terms of biological role, involved in the biosynthesis of the central metabolite phospho-alpha-D-ribosyl-1-pyrophosphate (PRPP) via the transfer of pyrophosphoryl group from ATP to 1-hydroxyl of ribose-5-phosphate (Rib-5-P). The protein is Ribose-phosphate pyrophosphokinase of Neisseria meningitidis serogroup A / serotype 4A (strain DSM 15465 / Z2491).